A 483-amino-acid polypeptide reads, in one-letter code: Proline--tRNA ligase (483 aa).

It belongs to the class-II aminoacyl-tRNA synthetase family. ProS type 3 subfamily. In terms of assembly, homodimer.

It is found in the cytoplasm. It catalyses the reaction tRNA(Pro) + L-proline + ATP = L-prolyl-tRNA(Pro) + AMP + diphosphate. In terms of biological role, catalyzes the attachment of proline to tRNA(Pro) in a two-step reaction: proline is first activated by ATP to form Pro-AMP and then transferred to the acceptor end of tRNA(Pro). This Mycoplasma genitalium (strain ATCC 33530 / DSM 19775 / NCTC 10195 / G37) (Mycoplasmoides genitalium) protein is Proline--tRNA ligase.